Reading from the N-terminus, the 335-residue chain is Ferrochelatase (335 aa).

Fe cation contacts are provided by H211 and E290.

Belongs to the ferrochelatase family.

It localises to the cytoplasm. It carries out the reaction heme b + 2 H(+) = protoporphyrin IX + Fe(2+). The protein operates within porphyrin-containing compound metabolism; protoheme biosynthesis; protoheme from protoporphyrin-IX: step 1/1. Its function is as follows. Catalyzes the ferrous insertion into protoporphyrin IX. The polypeptide is Ferrochelatase (Sulfurihydrogenibium sp. (strain YO3AOP1)).